The chain runs to 208 residues: Small ribosomal subunit protein uS4 (208 aa).

The S4 RNA-binding domain occupies 98–161; it reads LRLDNVVFRL…RKVVRISEAL (64 aa).

Belongs to the universal ribosomal protein uS4 family. As to quaternary structure, part of the 30S ribosomal subunit. Contacts protein S5. The interaction surface between S4 and S5 is involved in control of translational fidelity.

Its function is as follows. One of the primary rRNA binding proteins, it binds directly to 16S rRNA where it nucleates assembly of the body of the 30S subunit. Functionally, with S5 and S12 plays an important role in translational accuracy. This chain is Small ribosomal subunit protein uS4, found in Anaeromyxobacter sp. (strain Fw109-5).